Here is a 417-residue protein sequence, read N- to C-terminus: Xylulose 5-phosphate/phosphate translocator, chloroplastic (417 aa).

The transit peptide at 1–82 directs the protein to the chloroplast; it reads MISLNLSPSL…GFSRKPRSIA (82 aa). Residues 66–102 form a disordered region; that stretch reads TNPESSSGFSRKPRSIAAVGSSDSNPDEKSDLGEAEK. At A83 the chain carries N-acetylalanine. Residues 91–102 are compositionally biased toward basic and acidic residues; the sequence is PDEKSDLGEAEK. Transmembrane regions (helical) follow at residues 109-129, 141-161, 173-193, 198-218, 225-245, 247-267, 287-307, 318-338, and 384-404; these read TLQLGIVFGLWYFQNIVFNIF, WLLASFQLFAGSIWMLVLWSF, FIIALLGPALFHTIGHISACV, VAVSFTHVIKSAEPVFSVIFS, YPLAVWLSILPIVMGCSLAAV, EVSFNLGGLSGAMISNVGFVL, LYGCISILSLLYLFPVAIFVE, AIASVGTPSTFYFWVLLSGVF, and LNALGSAIAIFGTFLYSQATA. In terms of domain architecture, EamA spans 127–243; that stretch reads NIFNKKALNV…LPIVMGCSLA (117 aa).

It belongs to the TPT transporter family. TPT (TC 2.A.7.9) subfamily. As to expression, widely expressed.

It is found in the plastid. The protein resides in the chloroplast membrane. Functionally, sugar phosphate/phosphate translocator that transports inorganic phosphate, triose phosphate, 3-phosphoglycerate, xylulose 5-phosphate (Xul-5-P) and to a lesser extent ribulose 5-phosphate. Does not transport ribose 5-phosphate or hexose phosphates. Provides cytosolic Xul-5-P to the chloroplast, where it is used as an intermediate in the plastidic pentose phosphate pathways. The chain is Xylulose 5-phosphate/phosphate translocator, chloroplastic (XPT) from Arabidopsis thaliana (Mouse-ear cress).